Here is a 272-residue protein sequence, read N- to C-terminus: HMP-PP phosphatase (272 aa).

Catalysis depends on D8, which acts as the Nucleophile. Mg(2+)-binding residues include D8, D10, and D212.

The protein belongs to the HAD-like hydrolase superfamily. Cof family. Requires Mg(2+) as cofactor.

It carries out the reaction 4-amino-2-methyl-5-(diphosphooxymethyl)pyrimidine + H2O = 4-amino-2-methyl-5-(phosphooxymethyl)pyrimidine + phosphate + H(+). In terms of biological role, catalyzes the hydrolysis of 4-amino-2-methyl-5-hydroxymethylpyrimidine pyrophosphate (HMP-PP) to 4-amino-2-methyl-5-hydroxymethylpyrimidine phosphate (HMP-P). This Escherichia coli O8 (strain IAI1) protein is HMP-PP phosphatase.